The primary structure comprises 131 residues: Large-conductance mechanosensitive channel (131 aa).

Helical transmembrane passes span 14–34 (IMDL…VTSL), 38–58 (IIMP…LAVT), and 67–87 (GSFI…FIVI).

Belongs to the MscL family. As to quaternary structure, homopentamer.

It is found in the cell membrane. Functionally, channel that opens in response to stretch forces in the membrane lipid bilayer. May participate in the regulation of osmotic pressure changes within the cell. This chain is Large-conductance mechanosensitive channel, found in Bacillus velezensis (strain DSM 23117 / BGSC 10A6 / LMG 26770 / FZB42) (Bacillus amyloliquefaciens subsp. plantarum).